We begin with the raw amino-acid sequence, 200 residues long: Probable GTP-binding protein EngB (200 aa).

Residues 22–197 form the EngB-type G domain; it reads DLPEIAFAGR…WQAIQDAVEE (176 aa). GTP contacts are provided by residues 30 to 37, 57 to 61, 78 to 81, 145 to 148, and 176 to 178; these read GRSNVGKS, GRTQL, DLPG, TKCD, and FSA. Mg(2+)-binding residues include S37 and T59.

The protein belongs to the TRAFAC class TrmE-Era-EngA-EngB-Septin-like GTPase superfamily. EngB GTPase family. The cofactor is Mg(2+).

Its function is as follows. Necessary for normal cell division and for the maintenance of normal septation. The polypeptide is Probable GTP-binding protein EngB (Trichlorobacter lovleyi (strain ATCC BAA-1151 / DSM 17278 / SZ) (Geobacter lovleyi)).